The sequence spans 755 residues: SWI/SNF-related matrix-associated actin-dependent regulator of chromatin subfamily A-like protein 1 (755 aa).

Positions 7–27 (SEIAEKKRIALAKLQAKKSQL) form a coiled coil. 2 disordered regions span residues 26 to 91 (QLLA…NKSS) and 104 to 134 (SNRE…SLSS). Polar residues predominate over residues 32 to 63 (PATNGKSTTSATGATQHANNGKSNPNQPQAKS). Serine 63 bears the Phosphoserine mark. The 79-residue stretch at 139 to 217 (PVAVLLGNSI…KPYVHMNGIP (79 aa)) folds into the HARP domain. Residues 256 to 412 (CFAIAQKGRI…FTQLQMIDGK (157 aa)) enclose the Helicase ATP-binding domain. Residue 269–276 (DEMGLGKT) coordinates ATP. Residues 361 to 364 (DESH) carry the DESH box motif. In terms of domain architecture, Helicase C-terminal spans 527 to 681 (YLKTLVKEQK…NLQKATHTAA (155 aa)).

This sequence belongs to the SNF2/RAD54 helicase family. SMARCAL1 subfamily.

It is found in the nucleus. Functionally, ATP-dependent annealing helicase that catalyzes the rewinding of the stably unwound DNA. The chain is SWI/SNF-related matrix-associated actin-dependent regulator of chromatin subfamily A-like protein 1 (Marcal1) from Drosophila melanogaster (Fruit fly).